The sequence spans 267 residues: Cell cycle checkpoint protein RAD1 homolog mrt-2 (267 aa).

This sequence belongs to the Rad1 family. As to quaternary structure, probable component of the toroidal 9-1-1 (RAD9-RAD1-HUS1) complex, composed of hpr-9, mrt-2 and hus-1. Interacts with hus-1. Might associate with hpr-9.

The protein localises to the nucleus. It catalyses the reaction Exonucleolytic cleavage in the 3'- to 5'-direction to yield nucleoside 5'-phosphates.. Functionally, may be a component of the 9-1-1 cell-cycle checkpoint response complex that plays a major role in DNA repair. Promotes DNA double strand break-induced cell cycle arrest and apoptosis, thereby playing a role in genome stability. Also required for telomere length maintenance and germline immortality. May possess 3'-&gt;5' double stranded DNA exonuclease activity. The protein is Cell cycle checkpoint protein RAD1 homolog mrt-2 of Caenorhabditis elegans.